The primary structure comprises 536 residues: Solute carrier family 2, facilitated glucose transporter member 10 (536 aa).

At 1-15 (MGLRPAVLLLCASVS) the chain is on the cytoplasmic side. The chain crosses the membrane as a helical span at residues 16–36 (LLGGLTFGYELAVISGALLPL). At 37–48 (QLNFGLSCLEQE) the chain is on the extracellular side. The helical transmembrane segment at 49–69 (LLVGSLLLGALLASLVGGFLI) threads the bilayer. Residues 70–82 (DCYGRRRAILGSN) are Cytoplasmic-facing. A helical membrane pass occupies residues 83–103 (AVLLAGSLILGLASSLPWLLL). Topologically, residues 104 to 107 (GRLS) are extracellular. The helical transmembrane segment at 108–128 (VGFAISLSSMACCIYVSELVG) threads the bilayer. At 129 to 132 (PRQR) the chain is on the cytoplasmic side. A helical membrane pass occupies residues 133–153 (GVLVSLYEVGITVGILFSYGL). The Extracellular portion of the chain corresponds to 154-166 (NYVLAGSPWGWRH). A helical transmembrane segment spans residues 167–187 (MFGWAAAPALLQSLSLFLLPA). Residues 188–232 (GAEGTAAPKDLIPLQGRETSKPGLVKPQYSFLDLFRAQDGMWSRT) lie on the Cytoplasmic side of the membrane. The chain crosses the membrane as a helical span at residues 233-253 (VVGLGLVLFQQLTGQPNVLYY). 242–243 (QQ) is a D-glucose binding site. The Extracellular segment spans residues 254 to 269 (ASTIFRSVGFHGGSSA). Residues 270 to 290 (VLASVGLGTVKVAATLVATGL) form a helical membrane-spanning segment. At 291 to 298 (VDRAGRRV) the chain is on the cytoplasmic side. A helical membrane pass occupies residues 299–319 (LLLFGCALMALSVSGIGLVSF). Residues 320–402 (AVSLDSGPSC…VPTSPILEHT (83 aa)) lie on the Extracellular side of the membrane. The chain crosses the membrane as a helical span at residues 403 to 423 (LLCWSALVCMMVYVSAFSVGF). At 424-442 (GPVTWLVLSEIYPAEIRGR) the chain is on the cytoplasmic side. Tryptophan 428 is a binding site for D-glucose. A helical membrane pass occupies residues 443–463 (AFAFCSSFNWAANLFISLSFL). Over 464–468 (DLIGA) the chain is Extracellular. A helical transmembrane segment spans residues 469–489 (IGLAWTFLLYGLTAVLGLAFI). Residues 490–536 (YLLVPETKGQSLAEIEQQFQTSRFPLNFGHRQRIGIQYHRLDVSSAS) lie on the Cytoplasmic side of the membrane.

The protein belongs to the major facilitator superfamily. Sugar transporter (TC 2.A.1.1) family. Glucose transporter subfamily.

It localises to the endomembrane system. Its subcellular location is the cytoplasm. It is found in the perinuclear region. The catalysed reaction is D-glucose(out) = D-glucose(in). Facilitative glucose transporter required for the development of the cardiovascular system. The protein is Solute carrier family 2, facilitated glucose transporter member 10 of Mus musculus (Mouse).